Here is a 330-residue protein sequence, read N- to C-terminus: Phenylalanine--tRNA ligase alpha subunit (330 aa).

Glu-246 serves as a coordination point for Mg(2+).

The protein belongs to the class-II aminoacyl-tRNA synthetase family. Phe-tRNA synthetase alpha subunit type 1 subfamily. As to quaternary structure, tetramer of two alpha and two beta subunits. Mg(2+) is required as a cofactor.

It localises to the cytoplasm. The catalysed reaction is tRNA(Phe) + L-phenylalanine + ATP = L-phenylalanyl-tRNA(Phe) + AMP + diphosphate + H(+). The chain is Phenylalanine--tRNA ligase alpha subunit from Wolinella succinogenes (strain ATCC 29543 / DSM 1740 / CCUG 13145 / JCM 31913 / LMG 7466 / NCTC 11488 / FDC 602W) (Vibrio succinogenes).